We begin with the raw amino-acid sequence, 516 residues long: GMP synthase [glutamine-hydrolyzing] (516 aa).

Positions 7-203 constitute a Glutamine amidotransferase type-1 domain; that stretch reads SVIVLDFGSQ…LIDIAGITPD (197 aa). The active-site Nucleophile is cysteine 84. Residues histidine 177 and glutamate 179 contribute to the active site. In terms of domain architecture, GMPS ATP-PPase spans 204 to 391; that stretch reads WSPKSFIQHQ…LGIAEDILMR (188 aa). 231–237 serves as a coordination point for ATP; that stretch reads SGGVDST.

In terms of assembly, homodimer.

The catalysed reaction is XMP + L-glutamine + ATP + H2O = GMP + L-glutamate + AMP + diphosphate + 2 H(+). Its pathway is purine metabolism; GMP biosynthesis; GMP from XMP (L-Gln route): step 1/1. Its function is as follows. Catalyzes the synthesis of GMP from XMP. This Chlorobaculum tepidum (strain ATCC 49652 / DSM 12025 / NBRC 103806 / TLS) (Chlorobium tepidum) protein is GMP synthase [glutamine-hydrolyzing].